We begin with the raw amino-acid sequence, 555 residues long: Dihydroxy-acid dehydratase (555 aa).

D78 lines the Mg(2+) pocket. C119 contacts [2Fe-2S] cluster. Mg(2+)-binding residues include D120 and K121. K121 carries the N6-carboxylysine modification. C191 provides a ligand contact to [2Fe-2S] cluster. E444 serves as a coordination point for Mg(2+). S470 functions as the Proton acceptor in the catalytic mechanism.

Belongs to the IlvD/Edd family. Homodimer. [2Fe-2S] cluster serves as cofactor. Mg(2+) is required as a cofactor.

It catalyses the reaction (2R)-2,3-dihydroxy-3-methylbutanoate = 3-methyl-2-oxobutanoate + H2O. The enzyme catalyses (2R,3R)-2,3-dihydroxy-3-methylpentanoate = (S)-3-methyl-2-oxopentanoate + H2O. Its pathway is amino-acid biosynthesis; L-isoleucine biosynthesis; L-isoleucine from 2-oxobutanoate: step 3/4. The protein operates within amino-acid biosynthesis; L-valine biosynthesis; L-valine from pyruvate: step 3/4. Its function is as follows. Functions in the biosynthesis of branched-chain amino acids. Catalyzes the dehydration of (2R,3R)-2,3-dihydroxy-3-methylpentanoate (2,3-dihydroxy-3-methylvalerate) into 2-oxo-3-methylpentanoate (2-oxo-3-methylvalerate) and of (2R)-2,3-dihydroxy-3-methylbutanoate (2,3-dihydroxyisovalerate) into 2-oxo-3-methylbutanoate (2-oxoisovalerate), the penultimate precursor to L-isoleucine and L-valine, respectively. This is Dihydroxy-acid dehydratase from Maridesulfovibrio salexigens (strain ATCC 14822 / DSM 2638 / NCIMB 8403 / VKM B-1763) (Desulfovibrio salexigens).